The primary structure comprises 192 residues: Molybdenum cofactor guanylyltransferase (192 aa).

GTP contacts are provided by residues 10–12 (LAG), lysine 23, asparagine 51, aspartate 69, and aspartate 99. Aspartate 99 contributes to the Mg(2+) binding site.

This sequence belongs to the MobA family. In terms of assembly, monomer. Requires Mg(2+) as cofactor.

It is found in the cytoplasm. The catalysed reaction is Mo-molybdopterin + GTP + H(+) = Mo-molybdopterin guanine dinucleotide + diphosphate. Transfers a GMP moiety from GTP to Mo-molybdopterin (Mo-MPT) cofactor (Moco or molybdenum cofactor) to form Mo-molybdopterin guanine dinucleotide (Mo-MGD) cofactor. This chain is Molybdenum cofactor guanylyltransferase, found in Haemophilus influenzae (strain ATCC 51907 / DSM 11121 / KW20 / Rd).